We begin with the raw amino-acid sequence, 48 residues long: Putative ATP synthase protein 8-like protein (48 aa).

The helical transmembrane segment at 17-37 (GFLVILLTLLLLSYAFLSMIL) threads the bilayer.

It belongs to the ATPase protein 8 family.

Its subcellular location is the membrane. The chain is Putative ATP synthase protein 8-like protein from Eremothecium gossypii (strain ATCC 10895 / CBS 109.51 / FGSC 9923 / NRRL Y-1056) (Yeast).